The following is an 851-amino-acid chain: Glutathione transporter 1 (851 aa).

A compositionally biased stretch (polar residues) spans methionine 1–arginine 14. The disordered stretch occupies residues methionine 1–glutamate 116. N-linked (GlcNAc...) asparagine glycosylation is present at asparagine 32. A compositionally biased stretch (low complexity) spans leucine 33 to histidine 68. Over residues phenylalanine 74–proline 92 the composition is skewed to polar residues. A glycan (N-linked (GlcNAc...) asparagine) is linked at asparagine 77. At serine 93 the chain carries Phosphoserine. Residues valine 105–tyrosine 134 are a coiled coil. Residue asparagine 109 is glycosylated (N-linked (GlcNAc...) asparagine). Transmembrane regions (helical) follow at residues threonine 156 to leucine 176 and proline 179 to leucine 199. Asparagine 256 is a glycosylation site (N-linked (GlcNAc...) asparagine). A run of 4 helical transmembrane segments spans residues tryptophan 259–leucine 279, arginine 282–phenylalanine 302, phenylalanine 333–lysine 353, and tryptophan 405–leucine 425. Asparagine 452 and asparagine 464 each carry an N-linked (GlcNAc...) asparagine glycan. A run of 5 helical transmembrane segments spans residues tyrosine 480–leucine 500, alanine 531–valine 551, valine 560–leucine 580, isoleucine 592–isoleucine 612, and isoleucine 642–glutamine 662. Asparagine 691 carries an N-linked (GlcNAc...) asparagine glycan. Transmembrane regions (helical) follow at residues tyrosine 711–leucine 731, proline 757–isoleucine 777, and valine 791–valine 811. The N-linked (GlcNAc...) asparagine glycan is linked to asparagine 843.

The protein belongs to the oligopeptide OPT transporter family.

The protein resides in the endoplasmic reticulum membrane. Its subcellular location is the cell membrane. Its function is as follows. High-affinity glutathione transporter which plays a role in scavenging glutathione from the extracellular environment for the maintenance of sulfur homeostasis. In Schizosaccharomyces pombe (strain 972 / ATCC 24843) (Fission yeast), this protein is Glutathione transporter 1 (pgt1).